Consider the following 498-residue polypeptide: ATP synthase subunit beta, chloroplastic (498 aa).

ATP is bound at residue 172–179 (GGAGVGKT).

It belongs to the ATPase alpha/beta chains family. As to quaternary structure, F-type ATPases have 2 components, CF(1) - the catalytic core - and CF(0) - the membrane proton channel. CF(1) has five subunits: alpha(3), beta(3), gamma(1), delta(1), epsilon(1). CF(0) has four main subunits: a(1), b(1), b'(1) and c(9-12).

The protein resides in the plastid. It is found in the chloroplast thylakoid membrane. The catalysed reaction is ATP + H2O + 4 H(+)(in) = ADP + phosphate + 5 H(+)(out). Produces ATP from ADP in the presence of a proton gradient across the membrane. The catalytic sites are hosted primarily by the beta subunits. This Nymphaea odorata (White water lily) protein is ATP synthase subunit beta, chloroplastic.